The following is a 177-amino-acid chain: Large ribosomal subunit protein uL5 (177 aa).

The protein belongs to the universal ribosomal protein uL5 family. In terms of assembly, part of the 50S ribosomal subunit; contacts the 5S rRNA and probably tRNA. Forms a bridge to the 30S subunit in the 70S ribosome.

Its function is as follows. This is one of the proteins that bind and probably mediate the attachment of the 5S RNA into the large ribosomal subunit, where it forms part of the central protuberance. In the 70S ribosome it contacts protein S13 of the 30S subunit (bridge B1b), connecting the 2 subunits; this bridge is implicated in subunit movement. May contact the P site tRNA; the 5S rRNA and some of its associated proteins might help stabilize positioning of ribosome-bound tRNAs. The polypeptide is Large ribosomal subunit protein uL5 (Sulfurisphaera tokodaii (strain DSM 16993 / JCM 10545 / NBRC 100140 / 7) (Sulfolobus tokodaii)).